The following is a 929-amino-acid chain: Isoleucine--tRNA ligase (929 aa).

Positions 58 to 68 match the 'HIGH' region motif; that stretch reads PYANGDIHIGH. Residue glutamate 568 coordinates L-isoleucyl-5'-AMP. The 'KMSKS' region motif lies at 609–613; the sequence is KMSKS. Residue lysine 612 participates in ATP binding. Residues cysteine 892, cysteine 895, cysteine 912, and cysteine 915 each coordinate Zn(2+).

This sequence belongs to the class-I aminoacyl-tRNA synthetase family. IleS type 1 subfamily. Monomer. Requires Zn(2+) as cofactor.

It localises to the cytoplasm. The enzyme catalyses tRNA(Ile) + L-isoleucine + ATP = L-isoleucyl-tRNA(Ile) + AMP + diphosphate. Functionally, catalyzes the attachment of isoleucine to tRNA(Ile). As IleRS can inadvertently accommodate and process structurally similar amino acids such as valine, to avoid such errors it has two additional distinct tRNA(Ile)-dependent editing activities. One activity is designated as 'pretransfer' editing and involves the hydrolysis of activated Val-AMP. The other activity is designated 'posttransfer' editing and involves deacylation of mischarged Val-tRNA(Ile). This Thiobacillus denitrificans (strain ATCC 25259 / T1) protein is Isoleucine--tRNA ligase.